The chain runs to 509 residues: Pentatricopeptide repeat-containing protein At2g13420, mitochondrial (509 aa).

A mitochondrion-targeting transit peptide spans 1–19 (MLLLKQISPPFHLHQLRRR). PPR repeat units lie at residues 172-202 (RLVE…RKEE), 206-240 (DEKV…GIEP), 241-285 (NVVT…GIEP), 286-320 (DVTS…GISP), 321-355 (TIET…GISP), 356-390 (SSAT…LCKP), 391-425 (STQT…ETGP), and 426-460 (DLDS…GFLP).

This sequence belongs to the PPR family. P subfamily.

The protein localises to the mitochondrion. The chain is Pentatricopeptide repeat-containing protein At2g13420, mitochondrial from Arabidopsis thaliana (Mouse-ear cress).